A 287-amino-acid chain; its full sequence is Shikimate dehydrogenase (NADP(+)) (287 aa).

Shikimate-binding positions include 20 to 22 and threonine 67; that span reads SRS. Residue lysine 71 is the Proton acceptor of the active site. Glutamate 84 is a binding site for NADP(+). Shikimate is bound by residues asparagine 93 and aspartate 108. NADP(+)-binding positions include 132 to 136, 156 to 161, and methionine 226; these read GAGGA and NRTAAR. Tyrosine 228 is a binding site for shikimate. Residue glycine 250 coordinates NADP(+).

This sequence belongs to the shikimate dehydrogenase family. As to quaternary structure, homodimer.

The catalysed reaction is shikimate + NADP(+) = 3-dehydroshikimate + NADPH + H(+). Its pathway is metabolic intermediate biosynthesis; chorismate biosynthesis; chorismate from D-erythrose 4-phosphate and phosphoenolpyruvate: step 4/7. In terms of biological role, involved in the biosynthesis of the chorismate, which leads to the biosynthesis of aromatic amino acids. Catalyzes the reversible NADPH linked reduction of 3-dehydroshikimate (DHSA) to yield shikimate (SA). The sequence is that of Shikimate dehydrogenase (NADP(+)) from Bordetella bronchiseptica (strain ATCC BAA-588 / NCTC 13252 / RB50) (Alcaligenes bronchisepticus).